A 110-amino-acid chain; its full sequence is Large ribosomal subunit protein uL22 (110 aa).

Belongs to the universal ribosomal protein uL22 family. As to quaternary structure, part of the 50S ribosomal subunit.

Its function is as follows. This protein binds specifically to 23S rRNA; its binding is stimulated by other ribosomal proteins, e.g. L4, L17, and L20. It is important during the early stages of 50S assembly. It makes multiple contacts with different domains of the 23S rRNA in the assembled 50S subunit and ribosome. In terms of biological role, the globular domain of the protein is located near the polypeptide exit tunnel on the outside of the subunit, while an extended beta-hairpin is found that lines the wall of the exit tunnel in the center of the 70S ribosome. In Bdellovibrio bacteriovorus (strain ATCC 15356 / DSM 50701 / NCIMB 9529 / HD100), this protein is Large ribosomal subunit protein uL22.